Here is a 557-residue protein sequence, read N- to C-terminus: Dihydroxy-acid dehydratase (557 aa).

Aspartate 78 serves as a coordination point for Mg(2+). [2Fe-2S] cluster is bound at residue cysteine 119. Mg(2+) is bound by residues aspartate 120 and lysine 121. Lysine 121 carries the post-translational modification N6-carboxylysine. Cysteine 192 provides a ligand contact to [2Fe-2S] cluster. Glutamate 443 contributes to the Mg(2+) binding site. Serine 469 acts as the Proton acceptor in catalysis.

Belongs to the IlvD/Edd family. In terms of assembly, homodimer. [2Fe-2S] cluster is required as a cofactor. It depends on Mg(2+) as a cofactor.

The catalysed reaction is (2R)-2,3-dihydroxy-3-methylbutanoate = 3-methyl-2-oxobutanoate + H2O. The enzyme catalyses (2R,3R)-2,3-dihydroxy-3-methylpentanoate = (S)-3-methyl-2-oxopentanoate + H2O. It functions in the pathway amino-acid biosynthesis; L-isoleucine biosynthesis; L-isoleucine from 2-oxobutanoate: step 3/4. The protein operates within amino-acid biosynthesis; L-valine biosynthesis; L-valine from pyruvate: step 3/4. Functions in the biosynthesis of branched-chain amino acids. Catalyzes the dehydration of (2R,3R)-2,3-dihydroxy-3-methylpentanoate (2,3-dihydroxy-3-methylvalerate) into 2-oxo-3-methylpentanoate (2-oxo-3-methylvalerate) and of (2R)-2,3-dihydroxy-3-methylbutanoate (2,3-dihydroxyisovalerate) into 2-oxo-3-methylbutanoate (2-oxoisovalerate), the penultimate precursor to L-isoleucine and L-valine, respectively. The protein is Dihydroxy-acid dehydratase of Persephonella marina (strain DSM 14350 / EX-H1).